Here is a 1690-residue protein sequence, read N- to C-terminus: MPMSSFKRKIKAIQIKIASPEVIRSWSGGEVKKPETINYRTFKPERDGLFCERIFGPVKDYECACGKYKGKKYEGTVCERCGVRVESREARRKRMGHIELAAPAVHIWYLESIPSVLGTLLNMSTSDLENIIYYGSRRVIERAFIVTDPKDTPFSQGDVIYETEYRIYRKKWDFEVEQAFVVKNPKSPVLSDIDGEVTLKTEKSITGREITWIIVKNITRATHTVLPGMILVVKDGQEVEKGQDLTKEMTIDPVYAPFDGHVEIDELSNTITLKPLTTSKDQPVVFTAPYGAKILVSNGQKVKKGDQITTSTSLPSVKSSISGTVRFGSNLNIRALEDGNFEVLSTGEVYVEQVIEERKYPVFEGALVYVNNGDQVKKGDHLADRFLFEEEYLSATEYKIFESHYPTMFDVEERTENDRPIVVITDIDPEVSKETGLKVGDIVTENEYEAYLQIYPEKIVADAGAQAIKKLLQNLDLEALQAEIEAELKKLPSSSSKAIKLRRRLKMVKDFLKSGNKPEWMVLEVVPVIPPDLRPMIQIEGGRFATTDLNELYRRLINRNNRLKKLLELGAPEIILRNEKRMLQEAVDALIHNGSDSEGKRSRRAVLKDRNGRPLKSLTDLLKGKKGRFRRNLLGKRVDYSGRAVIVVGPHLKIHQCGIPKKMAMELFKPFVLAKLLGEGSSSKTMRKVKKAIIEKEMPEAWEVLEEVIKGSVVLLNRAPTLHRMSIQAFEPKLVEGNAIQLHPVVCPPFNADFDGDQMAVHVPLSAAAQAEARFLMLSRYNIISPAHGKPISLPTQDIIIGSYYLTTVSKEFDSLKEEDVKWKFSSPEEAMLAYHLGFIKLHTPILIKVVINGEEKRIKTTLGRVIFNSILPEDLRDYNRIFDKKQINTLVYETFKRHGIDRAADLLDDIKDIGFHYATVSGLTLSLKDLKIPPERDEILRKTWEKVRIIEENYEKGFLTEEQRKSEIIRLWMSVTEEITKLTSRTLAEDPFNPIYMMVNSGARGNIDQVKQLAGIRGLMIKAYDPRSREIKSKIFKGQAIHEALTFDYPVDKNLREGVDILQFFISTYGARKGQVDTAMNTSFAGYLTRRLVDVAQSVTVAEPDCGTHEGIRAMDLIKEGTVVEKMNEFLFGRVLAKDVLDPETKEVLKNPETGKEYTRNTMLTDDDANFLASYKKMVDVVRYEEIDITELSLPNMYAEIAEPVGEYEEGTELTWDVVKAAKNEGKYRIKVKVYPVVGTVYAEEEPLYDKKGERQLLVYQEVINEIVAKMLEENGIEKVPVRPDIIVRSPLTCESEYGVCAACYGMDLSNHKIVNVGESVGIVAAQSIGEPGTQLTMRTFHVGGVMGASDIVSGLTTVEKTFEPYAFLREEKSGGKKEIRKYYGSESILCEVDGFVKDIATDESGRTVIYVEDYAGNIHAYKVPKRAKVRVEKGQKVLRGETLTSGAIVWWKLLELESEKGVMTAMNLLKIIKNAYVQQGVSIHDKHFEIIFKQMLSMATIVDPGDSDYLPDQLVPLVDIKRFNREILEGNAKVEENRKWVIGKTLAKRIIAETEEGELVELAQKGDEVTEELLKKIIEAGIKEIDVFEKDKVVTYQILPKEPIKYKRRLLSLKKAALNYPGWLSAAAFEETAWVLTAAAIEGKVDPLIGLKENVIVGQLIPSGTGLDVFAGIQVEETPRAAVEEELA.

4 residues coordinate Zn(2+): cysteine 63, cysteine 65, cysteine 78, and cysteine 81. Residues aspartate 753, aspartate 755, and aspartate 757 each contribute to the Mg(2+) site. Residues cysteine 1107, cysteine 1295, cysteine 1302, and cysteine 1305 each coordinate Zn(2+).

This sequence belongs to the RNA polymerase beta' chain family. The RNAP catalytic core consists of 2 alpha, 1 beta, 1 beta' and 1 omega subunit. When a sigma factor is associated with the core the holoenzyme is formed, which can initiate transcription. The cofactor is Mg(2+). It depends on Zn(2+) as a cofactor.

It catalyses the reaction RNA(n) + a ribonucleoside 5'-triphosphate = RNA(n+1) + diphosphate. Functionally, DNA-dependent RNA polymerase catalyzes the transcription of DNA into RNA using the four ribonucleoside triphosphates as substrates. This Thermotoga petrophila (strain ATCC BAA-488 / DSM 13995 / JCM 10881 / RKU-1) protein is DNA-directed RNA polymerase subunit beta'.